Here is a 73-residue protein sequence, read N- to C-terminus: Protein F9 homolog (73 aa).

The Virion surface segment spans residues 1 to 34 (GHAAANCALARVATALTRRVPASRHGLAEGGTPP). Residues 35-55 (WTLLLAVAAVTVLGVVAVSLL) traverse the membrane as a helical segment. At 56–73 (RRALRVRYRFARPAALRA) the chain is on the intravirion side.

The protein belongs to the chordopoxvirinae L1 protein family.

It localises to the virion membrane. This Capra hircus (Goat) protein is Protein F9 homolog.